The following is an 837-amino-acid chain: Protein translocase subunit SecA (837 aa).

Residues Gln87, 105 to 109 (GEGKT), and Asp494 each bind ATP. The interval 788–837 (HKESKSDLEYSDSENTETKKKPKRRSEPKVGRNDPCPCGSGKKYKKCCGK) is disordered. The Zn(2+) site is built by Cys823, Cys825, Cys834, and Cys835.

It belongs to the SecA family. As to quaternary structure, monomer and homodimer. Part of the essential Sec protein translocation apparatus which comprises SecA, SecYEG and auxiliary proteins SecDF-YajC and YidC. Zn(2+) serves as cofactor.

The protein localises to the cell inner membrane. Its subcellular location is the cytoplasm. It carries out the reaction ATP + H2O + cellular proteinSide 1 = ADP + phosphate + cellular proteinSide 2.. Its function is as follows. Part of the Sec protein translocase complex. Interacts with the SecYEG preprotein conducting channel. Has a central role in coupling the hydrolysis of ATP to the transfer of proteins into and across the cell membrane, serving as an ATP-driven molecular motor driving the stepwise translocation of polypeptide chains across the membrane. The polypeptide is Protein translocase subunit SecA (Maridesulfovibrio salexigens (strain ATCC 14822 / DSM 2638 / NCIMB 8403 / VKM B-1763) (Desulfovibrio salexigens)).